The primary structure comprises 176 residues: Protein MAL2 (176 aa).

Residues 1–34 (MSAGGAPVPPPPNPAMSFPAPRVTLPAGPDILRT) are Cytoplasmic-facing. The 145-residue stretch at 31-175 (ILRTYSGAFV…SLGLALRRWR (145 aa)) folds into the MARVEL domain. The chain crosses the membrane as a helical span at residues 35 to 55 (YSGAFVCLEIVFGGLVWILVA). Topologically, residues 56-66 (SSNVPLPLLQG) are lumenal. Residues 67-87 (WVMFVSVTAFVCSLLFLGVFL) traverse the membrane as a helical segment. Over 88–102 (SGVVTQINANWNFLD) the chain is Cytoplasmic. The helical transmembrane segment at 103 to 123 (FAYHFTVFVFYFGAFLLEAAT) threads the bilayer. Residues 124–149 (TSLHDLRCNRTMTVQPLLSDNQYNIN) lie on the Lumenal side of the membrane. Residue N132 is glycosylated (N-linked (GlcNAc...) asparagine). The chain crosses the membrane as a helical span at residues 150-170 (VAATIFAFVTTACYGCSLGLA). Residues 171–176 (LRRWRP) are Cytoplasmic-facing.

This sequence belongs to the MAL family. Interacts with TPD52L2.

Its subcellular location is the cell membrane. It localises to the apical cell membrane. Its function is as follows. Member of the machinery of polarized transport. Required for the indirect transcytotic route at the step of the egress of the transcytosing cargo from perinuclear endosomes in order for it to travel to the apical surface via a raft-dependent pathway. In Bos taurus (Bovine), this protein is Protein MAL2 (MAL2).